The chain runs to 467 residues: Ribulose bisphosphate carboxylase large chain (467 aa).

Positions 106 and 156 each coordinate substrate. The Proton acceptor role is filled by lysine 158. Position 160 (lysine 160) interacts with substrate. Residues lysine 184, aspartate 186, and glutamate 187 each contribute to the Mg(2+) site. At lysine 184 the chain carries N6-carboxylysine. Residue histidine 276 is the Proton acceptor of the active site. Substrate is bound by residues arginine 277, histidine 309, and serine 361.

This sequence belongs to the RuBisCO large chain family. Type I subfamily. In terms of assembly, heterohexadecamer of 8 large chains and 8 small chains. Requires Mg(2+) as cofactor.

The protein resides in the plastid. The protein localises to the chloroplast. The catalysed reaction is 2 (2R)-3-phosphoglycerate + 2 H(+) = D-ribulose 1,5-bisphosphate + CO2 + H2O. The enzyme catalyses D-ribulose 1,5-bisphosphate + O2 = 2-phosphoglycolate + (2R)-3-phosphoglycerate + 2 H(+). Functionally, ruBisCO catalyzes two reactions: the carboxylation of D-ribulose 1,5-bisphosphate, the primary event in carbon dioxide fixation, as well as the oxidative fragmentation of the pentose substrate in the photorespiration process. Both reactions occur simultaneously and in competition at the same active site. The protein is Ribulose bisphosphate carboxylase large chain (rbcL) of Chondrus crispus (Carrageen Irish moss).